The following is a 340-amino-acid chain: Aliphatic sulfonates import ATP-binding protein SsuB 1 (340 aa).

The tract at residues 44-72 (THHHARVAAQGHARGDAQPPAGALARDDG) is disordered. Residues 80 to 299 (VQLRGVGKRY…ARASAGFAAL (220 aa)) form the ABC transporter domain. Residue 112 to 119 (GRSGCGKS) coordinates ATP.

It belongs to the ABC transporter superfamily. Aliphatic sulfonates importer (TC 3.A.1.17.2) family. In terms of assembly, the complex is composed of two ATP-binding proteins (SsuB), two transmembrane proteins (SsuC) and a solute-binding protein (SsuA).

It localises to the cell inner membrane. The enzyme catalyses ATP + H2O + aliphatic sulfonate-[sulfonate-binding protein]Side 1 = ADP + phosphate + aliphatic sulfonateSide 2 + [sulfonate-binding protein]Side 1.. Functionally, part of the ABC transporter complex SsuABC involved in aliphatic sulfonates import. Responsible for energy coupling to the transport system. The sequence is that of Aliphatic sulfonates import ATP-binding protein SsuB 1 from Paraburkholderia xenovorans (strain LB400).